The sequence spans 140 residues: Nucleoside diphosphate kinase (140 aa).

Residues lysine 11, phenylalanine 59, arginine 87, threonine 93, arginine 104, and asparagine 114 each coordinate ATP. Histidine 117 functions as the Pros-phosphohistidine intermediate in the catalytic mechanism.

This sequence belongs to the NDK family. In terms of assembly, homotetramer. Mg(2+) is required as a cofactor.

It localises to the cytoplasm. It catalyses the reaction a 2'-deoxyribonucleoside 5'-diphosphate + ATP = a 2'-deoxyribonucleoside 5'-triphosphate + ADP. It carries out the reaction a ribonucleoside 5'-diphosphate + ATP = a ribonucleoside 5'-triphosphate + ADP. Major role in the synthesis of nucleoside triphosphates other than ATP. The ATP gamma phosphate is transferred to the NDP beta phosphate via a ping-pong mechanism, using a phosphorylated active-site intermediate. In Bradyrhizobium sp. (strain ORS 278), this protein is Nucleoside diphosphate kinase.